We begin with the raw amino-acid sequence, 39 residues long: Potassium channel toxin alpha-KTx 2.2 (39 aa).

Cystine bridges form between Cys7–Cys29, Cys13–Cys34, and Cys17–Cys36. The tract at residues 37–39 (YPH) is interaction with Kv1.3 channels.

It belongs to the short scorpion toxin superfamily. Potassium channel inhibitor family. Alpha-KTx 02 subfamily. Expressed by the venom gland.

It is found in the secreted. Functionally, potent inhibitor of voltage-gated potassium channels such as Kv1.1/KCNA1 (IC(50)=0.144 nM), Kv1.2/KCNA2 (IC(50)=0.675 nM), Kv1.3/KCNA3 (IC(50)=0.23 nM) and Shaker (Kd=160 nM). Suppresses expression of the Kv1.3/KCNA3 channel in lipopolysaccharide (LPS)-stimulated mouse macrophages. Down-regulates secretion of nitric oxide (NO) and inflammatory cytokines, such as TNF-alpha/TNF, IL-1beta/IL1B and IL6, in LPS-stimulated mouse macrophages in a manner dependent on Kv1.3/KCNA3 channel blockage. Reduces activation of MAPK and NF-kappa-B signaling pathways in LPS-stimulated mouse macrophages. Modulates intracellular Ca(2+) signaling in human PMA/ionomycin-triggered T-cells. Interferes with the activation of the MAPK, NF-kappa-B and NFATc1 pathways in human PMA/ionomycin-triggered T-cells. Reduces proliferation of human PMA/ionomycin-triggered T-cells. Down-regulates secretion of cytokines, such as TNF-alpha/TNF and IL2, in human PMA/ionomycin-triggered T-cells. This chain is Potassium channel toxin alpha-KTx 2.2, found in Centruroides margaritatus (Central American bark Scorpion).